The primary structure comprises 764 residues: Phenylalanine--tRNA ligase beta subunit (764 aa).

A tRNA-binding domain is found at 38-148; the sequence is CIAPKNVVVG…GELVLGKELH (111 aa). One can recognise a B5 domain in the interval 375-455; it reads LKDCALTFQL…RFVGIDNLVS (81 aa). Mg(2+) contacts are provided by Asp-433, Asp-439, Glu-442, and Glu-443. The region spanning 673–763 is the FDX-ACB domain; the sequence is SIYPSSVRDL…LEKEFNARLK (91 aa).

It belongs to the phenylalanyl-tRNA synthetase beta subunit family. Type 1 subfamily. As to quaternary structure, tetramer of two alpha and two beta subunits. Requires Mg(2+) as cofactor.

It localises to the cytoplasm. The catalysed reaction is tRNA(Phe) + L-phenylalanine + ATP = L-phenylalanyl-tRNA(Phe) + AMP + diphosphate + H(+). This Helicobacter pylori (strain J99 / ATCC 700824) (Campylobacter pylori J99) protein is Phenylalanine--tRNA ligase beta subunit (pheT).